Here is a 663-residue protein sequence, read N- to C-terminus: DNA ligase (663 aa).

Residues 31 to 35, 80 to 81, and Glu-110 each bind NAD(+); these read DFEFD and SL. Lys-112 functions as the N6-AMP-lysine intermediate in the catalytic mechanism. Residues Arg-133, Glu-170, Lys-285, and Lys-309 each coordinate NAD(+). The Zn(2+) site is built by Cys-404, Cys-407, Cys-422, and Cys-428. In terms of domain architecture, BRCT spans 585-663; it reads FIDNKLAGKT…SEDEFLKMIE (79 aa).

It belongs to the NAD-dependent DNA ligase family. LigA subfamily. The cofactor is Mg(2+). Requires Mn(2+) as cofactor.

It catalyses the reaction NAD(+) + (deoxyribonucleotide)n-3'-hydroxyl + 5'-phospho-(deoxyribonucleotide)m = (deoxyribonucleotide)n+m + AMP + beta-nicotinamide D-nucleotide.. DNA ligase that catalyzes the formation of phosphodiester linkages between 5'-phosphoryl and 3'-hydroxyl groups in double-stranded DNA using NAD as a coenzyme and as the energy source for the reaction. It is essential for DNA replication and repair of damaged DNA. This chain is DNA ligase, found in Azobacteroides pseudotrichonymphae genomovar. CFP2.